Reading from the N-terminus, the 287-residue chain is Orotidine 5'-phosphate decarboxylase (287 aa).

Lys-97 functions as the Proton donor in the catalytic mechanism.

This sequence belongs to the OMP decarboxylase family. Type 2 subfamily.

It carries out the reaction orotidine 5'-phosphate + H(+) = UMP + CO2. Its pathway is pyrimidine metabolism; UMP biosynthesis via de novo pathway; UMP from orotate: step 2/2. This chain is Orotidine 5'-phosphate decarboxylase (pyrF), found in Clostridium perfringens (strain 13 / Type A).